We begin with the raw amino-acid sequence, 440 residues long: D-serine dehydratase (440 aa).

Lys116 carries the post-translational modification N6-(pyridoxal phosphate)lysine.

Belongs to the serine/threonine dehydratase family. DsdA subfamily. As to quaternary structure, monomer. Pyridoxal 5'-phosphate is required as a cofactor.

The enzyme catalyses D-serine = pyruvate + NH4(+). This is D-serine dehydratase from Salmonella schwarzengrund (strain CVM19633).